Here is a 487-residue protein sequence, read N- to C-terminus: Catalase (487 aa).

Residues 1-20 are disordered; the sequence is MSQRVLTTESGAPVADNQNS. Residues His54 and Asn127 contribute to the active site. Tyr337 contacts heme.

It belongs to the catalase family. The cofactor is heme.

The catalysed reaction is 2 H2O2 = O2 + 2 H2O. Functionally, decomposes hydrogen peroxide into water and oxygen; serves to protect cells from the toxic effects of hydrogen peroxide. This is Catalase (katA) from Streptomyces coelicolor (strain ATCC BAA-471 / A3(2) / M145).